Here is a 140-residue protein sequence, read N- to C-terminus: PDZ domain-containing protein 11 (140 aa).

Residues 47–129 (TVVLKKPPGA…ITMRVRYFPY (83 aa)) form the PDZ domain.

It is found in the cytoplasm. This Gallus gallus (Chicken) protein is PDZ domain-containing protein 11 (PDZD11).